The following is a 245-amino-acid chain: Phycocyanobilin:ferredoxin oxidoreductase (245 aa).

This sequence belongs to the HY2 family.

The catalysed reaction is (2R,3Z)-phycocyanobilin + 4 oxidized [2Fe-2S]-[ferredoxin] = biliverdin IXalpha + 4 reduced [2Fe-2S]-[ferredoxin] + 4 H(+). Functionally, catalyzes the four-electron reduction of biliverdin IX-alpha (2-electron reduction at both the A and D rings); the reaction proceeds via an isolatable 2-electron intermediate, 181,182-dihydrobiliverdin. This chain is Phycocyanobilin:ferredoxin oxidoreductase (pcyA), found in Nostoc punctiforme (strain ATCC 29133 / PCC 73102).